A 1240-amino-acid polypeptide reads, in one-letter code: DNA-directed RNA polymerase subunit beta (1240 aa).

It belongs to the RNA polymerase beta chain family. The RNAP catalytic core consists of 2 alpha, 1 beta, 1 beta' and 1 omega subunit. When a sigma factor is associated with the core the holoenzyme is formed, which can initiate transcription.

The enzyme catalyses RNA(n) + a ribonucleoside 5'-triphosphate = RNA(n+1) + diphosphate. In terms of biological role, DNA-dependent RNA polymerase catalyzes the transcription of DNA into RNA using the four ribonucleoside triphosphates as substrates. The protein is DNA-directed RNA polymerase subunit beta of Phytoplasma australiense.